The following is a 947-amino-acid chain: MEASSVLPCKWCTHLQGLLLTASFLTCCHLPTTAQITIELEPPQVIEGENVLIRVNNLTENLITLAWFRGMRIKSPQIGQYTPATKVTVLGPGHSGRETLYSNGSLQIYNVTQEDIGFYSLRIINKHAEIVSITSIYLNVYSSLWTCEHPSPHAKLTIESVPPGISEGGSVLLLVKNLPQNLLSLFWYKGVIAVKKFEIARHIKATNSSVPGPAHTGRETVFSNGSLLLQEVMQSDTGFYTLRTMSTDLKDEVAHVQLYMDTYLLTCYHPLQVKIESLPQNVAVGKTVLLLVHNLPEDFQAFFWYKSAYRRDTYKIAEYKRAMDATILGSAYSSREFIYNNGSMLIIDVTEDDAGYFLLEILREDLKIEKAYIQLHVNSFVSNSKDSASTARLSIESVPPSIVEGGSVLLLVHNLPKNLQSLFWYKGMIAEKKSELIQHIIATSSSLPGPAHSGRETVYNNGSLLLQRVMQNDTQFYTLQTMDTDLKYEVAHVQLQLDTSLSTWYHPLQVKIESLPRNVAVGKSVLFLVHNFPEVFRAFSWYKPAYKSHTSKIVEYHRFTDSATVGAAYRGIEVIFTNGSMVMIDVTEDDAGFYMLEILREDFKVEKAYVQLHVNSFVPNSKVSVSTARLSIESVPPSIVGGESVLLLVHNLPKNLQSLFWYKGVIAEEKSELIQHIIATSSSLPGPAHSGRETVYSNGSLLLQRVMQNDTGFYTLLTMSTDLKDEIAHVQLQLDTSTCCSLLTSDQLIIVPVPRNIAVGKSVLLLVCNVPKDVQTIFWYKSVYRTDIFKIAEYSRSMESTIWGLAHSGKEMVYTNGSLLIQNVTEHDAGLYMLEILHKDYKLERAHVQVHVNNPVSWPFVRVTDTTVRVQSSVVFTCFSADPGVSIRWLFNKQSLQLTERMTLSPSKCQLSIDPVWREDAGKYQCEVSNPVSSKSSLPVRLAVIEE.

Residues 1-34 (MEASSVLPCKWCTHLQGLLLTASFLTCCHLPTTA) form the signal peptide. 7 Ig-like V-type domains span residues 35–132 (QITI…EIVS), 166–259 (SEGG…VQLY), 270–378 (PLQV…LHVN), 392–498 (RLSI…LQLD), 509–615 (QVKI…LHVN), 642–733 (GESV…VQLQ), and 746–851 (DQLI…VQVH). Residues Asn57, Asn103, Asn110, Asn207, Asn224, Asn341, Asn461, Asn472, Asn578, Asn698, Asn709, Asn816, and Asn823 are each glycosylated (N-linked (GlcNAc...) asparagine). The region spanning 859-943 (PFVRVTDTTV…SKSSLPVRLA (85 aa)) is the Ig-like C2-type 1 domain. Cys878 and Cys926 are disulfide-bonded.

It belongs to the immunoglobulin superfamily. CEA family. Homodimer.

It is found in the cell membrane. The protein resides in the apical cell membrane. Its subcellular location is the cell surface. Its function is as follows. Cell surface glycoprotein that plays a role in cell adhesion, intracellular signaling and tumor progression. Mediates homophilic and heterophilic cell adhesion with other carcinoembryonic antigen-related cell adhesion molecules, such as CEACAM6. Plays a role as an oncogene by promoting tumor progression; induces resistance to anoikis of colorectal carcinoma cells. This is Cell adhesion molecule CEACAM5 from Mus musculus (Mouse).